The sequence spans 269 residues: Eukaryotic translation initiation factor 3 subunit G-1 (269 aa).

One can recognise an RRM domain in the interval 188–266 (AAIRISNLSE…LILSVEWSKP (79 aa)).

It belongs to the eIF-3 subunit G family. In terms of assembly, component of the eukaryotic translation initiation factor 3 (eIF-3) complex. The eIF-3 complex interacts with pix.

The protein resides in the cytoplasm. RNA-binding component of the eukaryotic translation initiation factor 3 (eIF-3) complex, which is involved in protein synthesis of a specialized repertoire of mRNAs and, together with other initiation factors, stimulates binding of mRNA and methionyl-tRNAi to the 40S ribosome. The eIF-3 complex specifically targets and initiates translation of a subset of mRNAs involved in cell proliferation. This subunit can bind 18S rRNA. The sequence is that of Eukaryotic translation initiation factor 3 subunit G-1 from Drosophila mojavensis (Fruit fly).